A 603-amino-acid polypeptide reads, in one-letter code: Glutamyl-tRNA(Gln) amidotransferase subunit B, mitochondrial (603 aa).

2 disordered regions span residues 38–61 (RGRD…SNGA) and 72–91 (EQAR…PPEH). Polar residues predominate over residues 42-58 (WSSTSRRAIDTQTSGAS).

It belongs to the GatB/GatE family. GatB subfamily. As to quaternary structure, subunit of the heterotrimeric GatCAB amidotransferase (AdT) complex, composed of A, B and C subunits.

It localises to the mitochondrion. It carries out the reaction L-glutamyl-tRNA(Gln) + L-glutamine + ATP + H2O = L-glutaminyl-tRNA(Gln) + L-glutamate + ADP + phosphate + H(+). Allows the formation of correctly charged Gln-tRNA(Gln) through the transamidation of misacylated Glu-tRNA(Gln) in the mitochondria. The reaction takes place in the presence of glutamine and ATP through an activated gamma-phospho-Glu-tRNA(Gln). The polypeptide is Glutamyl-tRNA(Gln) amidotransferase subunit B, mitochondrial (Paracoccidioides brasiliensis (strain Pb18)).